Reading from the N-terminus, the 317-residue chain is 4-hydroxy-3-methylbut-2-enyl diphosphate reductase (317 aa).

Cysteine 12 is a [4Fe-4S] cluster binding site. Residues histidine 41 and histidine 74 each coordinate (2E)-4-hydroxy-3-methylbut-2-enyl diphosphate. Dimethylallyl diphosphate contacts are provided by histidine 41 and histidine 74. The isopentenyl diphosphate site is built by histidine 41 and histidine 74. Cysteine 96 contributes to the [4Fe-4S] cluster binding site. Histidine 124 serves as a coordination point for (2E)-4-hydroxy-3-methylbut-2-enyl diphosphate. Histidine 124 contributes to the dimethylallyl diphosphate binding site. Histidine 124 is an isopentenyl diphosphate binding site. Catalysis depends on glutamate 126, which acts as the Proton donor. Threonine 168 is a binding site for (2E)-4-hydroxy-3-methylbut-2-enyl diphosphate. Cysteine 198 provides a ligand contact to [4Fe-4S] cluster. (2E)-4-hydroxy-3-methylbut-2-enyl diphosphate-binding residues include serine 226, serine 227, asparagine 228, and serine 270. Dimethylallyl diphosphate contacts are provided by serine 226, serine 227, asparagine 228, and serine 270. Residues serine 226, serine 227, asparagine 228, and serine 270 each contribute to the isopentenyl diphosphate site.

This sequence belongs to the IspH family. The cofactor is [4Fe-4S] cluster.

It catalyses the reaction isopentenyl diphosphate + 2 oxidized [2Fe-2S]-[ferredoxin] + H2O = (2E)-4-hydroxy-3-methylbut-2-enyl diphosphate + 2 reduced [2Fe-2S]-[ferredoxin] + 2 H(+). The enzyme catalyses dimethylallyl diphosphate + 2 oxidized [2Fe-2S]-[ferredoxin] + H2O = (2E)-4-hydroxy-3-methylbut-2-enyl diphosphate + 2 reduced [2Fe-2S]-[ferredoxin] + 2 H(+). It functions in the pathway isoprenoid biosynthesis; dimethylallyl diphosphate biosynthesis; dimethylallyl diphosphate from (2E)-4-hydroxy-3-methylbutenyl diphosphate: step 1/1. Its pathway is isoprenoid biosynthesis; isopentenyl diphosphate biosynthesis via DXP pathway; isopentenyl diphosphate from 1-deoxy-D-xylulose 5-phosphate: step 6/6. Catalyzes the conversion of 1-hydroxy-2-methyl-2-(E)-butenyl 4-diphosphate (HMBPP) into a mixture of isopentenyl diphosphate (IPP) and dimethylallyl diphosphate (DMAPP). Acts in the terminal step of the DOXP/MEP pathway for isoprenoid precursor biosynthesis. This is 4-hydroxy-3-methylbut-2-enyl diphosphate reductase from Hahella chejuensis (strain KCTC 2396).